Consider the following 243-residue polypeptide: NH(3)-dependent NAD(+) synthetase (243 aa).

31–38 (GLSGGVDS) is a binding site for ATP. Aspartate 37 contacts Mg(2+). Deamido-NAD(+) is bound at residue arginine 116. Residue threonine 136 participates in ATP binding. Glutamate 141 contacts Mg(2+). The deamido-NAD(+) site is built by lysine 149 and aspartate 156. ATP is bound by residues lysine 165 and serine 187. Residue 233-234 (HK) participates in deamido-NAD(+) binding.

The protein belongs to the NAD synthetase family. Homodimer.

It carries out the reaction deamido-NAD(+) + NH4(+) + ATP = AMP + diphosphate + NAD(+) + H(+). It functions in the pathway cofactor biosynthesis; NAD(+) biosynthesis; NAD(+) from deamido-NAD(+) (ammonia route): step 1/1. Its function is as follows. Catalyzes the ATP-dependent amidation of deamido-NAD to form NAD. Uses ammonia as a nitrogen source. The polypeptide is NH(3)-dependent NAD(+) synthetase (Carboxydothermus hydrogenoformans (strain ATCC BAA-161 / DSM 6008 / Z-2901)).